The following is a 342-amino-acid chain: Protein-ribulosamine 3-kinase, chloroplastic (342 aa).

Residues 1-46 constitute a chloroplast transit peptide; sequence MANVALLSAASPSTSSAAPRLRHVARRRPSRRSACPRSAASRLSIM. ATP is bound at residue 141-143; the sequence is EFI. Asp-246 (proton acceptor) is an active-site residue.

It belongs to the fructosamine kinase family.

It is found in the plastid. Its subcellular location is the chloroplast. It catalyses the reaction N(6)-D-ribulosyl-L-lysyl-[protein] + ATP = N(6)-(3-O-phospho-D-ribulosyl)-L-lysyl-[protein] + ADP + H(+). The catalysed reaction is N(6)-(D-erythrulosyl)-L-lysyl-[protein] + ATP = N(6)-(3-O-phospho-D-erythrulosyl)-L-lysyl-[protein] + ADP + H(+). In terms of biological role, initiates a process leading to the deglycation of proteins. Phosphorylates low-molecular-mass and protein-bound erythrulosamines and ribulosamines, but not fructosamines or psicosamines, on the third carbon of the sugar moiety. Protein-bound erythrulosamine 3-phosphates and ribulosamine 3-phosphates are unstable and decompose under physiological conditions. This chain is Protein-ribulosamine 3-kinase, chloroplastic, found in Oryza sativa subsp. indica (Rice).